The primary structure comprises 414 residues: Serine hydroxymethyltransferase (414 aa).

Residues L116 and 120–122 (GHL) each bind (6S)-5,6,7,8-tetrahydrofolate. Position 224 is an N6-(pyridoxal phosphate)lysine (K224). Residues E240 and 348–350 (SPF) contribute to the (6S)-5,6,7,8-tetrahydrofolate site.

It belongs to the SHMT family. In terms of assembly, homodimer. Pyridoxal 5'-phosphate is required as a cofactor.

The protein localises to the cytoplasm. It carries out the reaction (6R)-5,10-methylene-5,6,7,8-tetrahydrofolate + glycine + H2O = (6S)-5,6,7,8-tetrahydrofolate + L-serine. The protein operates within one-carbon metabolism; tetrahydrofolate interconversion. Its pathway is amino-acid biosynthesis; glycine biosynthesis; glycine from L-serine: step 1/1. Functionally, catalyzes the reversible interconversion of serine and glycine with tetrahydrofolate (THF) serving as the one-carbon carrier. This reaction serves as the major source of one-carbon groups required for the biosynthesis of purines, thymidylate, methionine, and other important biomolecules. Also exhibits THF-independent aldolase activity toward beta-hydroxyamino acids, producing glycine and aldehydes, via a retro-aldol mechanism. In Campylobacter jejuni subsp. jejuni serotype O:2 (strain ATCC 700819 / NCTC 11168), this protein is Serine hydroxymethyltransferase.